Here is a 337-residue protein sequence, read N- to C-terminus: Zinc finger protein 488 (337 aa).

Over residues M1–S10 the composition is skewed to polar residues. Disordered regions lie at residues M1–K32, S55–D83, and S146–A179. The important for transcriptional repression activity stretch occupies residues T69–E184. 2 C2H2-type zinc fingers span residues N272 to H299 and L314 to H336. A Nuclear localization signal motif is present at residues H295–P302.

It belongs to the krueppel C2H2-type zinc-finger protein family. Interacts with OLIG2.

Its subcellular location is the nucleus. In terms of biological role, transcriptional repressor. Plays a role in oligodendrocyte differentiation, together with OLIG2. Mediates Notch signaling-activated formation of oligodendrocyte precursors. Promotes differentiation of adult neural stem progenitor cells (NSPCs) into mature oligodendrocytes and contributes to remyelination following nerve injury. The polypeptide is Zinc finger protein 488 (Znf488) (Mus musculus (Mouse)).